A 266-amino-acid polypeptide reads, in one-letter code: 22 kDa alpha-zein 8 (266 aa).

The first 21 residues, Met1–Ala21, serve as a signal peptide directing secretion.

Belongs to the zein family.

Functionally, zeins are major seed storage proteins. This Zea mays (Maize) protein is 22 kDa alpha-zein 8.